A 530-amino-acid polypeptide reads, in one-letter code: DEK domain-containing chromatin-associated protein 2 (530 aa).

Composition is skewed to basic and acidic residues over residues 1-47 (MATE…AEEE) and 57-68 (AKEGELGEKDKE). Residues 1–130 (MATETLDEKT…PSKSVSIEKG (130 aa)) form a disordered region. Residues 41 to 61 (IGEAEEEKKEDEEEGEAKEGE) are a coiled coil. Positions 69 to 82 (DDVESEEEEEEEEG) are enriched in acidic residues. 2 stretches are compositionally biased toward basic and acidic residues: residues 83–93 (SGSKKSSEKET) and 100–110 (RPTRERKKVER). Positions 185 to 205 (EKEEEKQRARIKEKIDKCVKE) form a coiled coil. The segment at 246–430 (IIADQEKAKK…GKAKAEPTRK (185 aa)) is disordered. Over residues 253–263 (AKKRKSTPKRG) the composition is skewed to basic residues. The short motif at 260–267 (PKRGKSGE) is the Nuclear localization signal 1 element. Over residues 286–332 (SDTEEGKDEGDADSEGTNDPHEEDDAAPEEESDHEKTDTDDEKDEVE) the composition is skewed to acidic residues. 2 consecutive short sequence motifs (nuclear localization signal) follow at residues 343–350 (SKKTVEES) and 384–391 (AKKQKVDH). Residues 374–384 (KQIAKSTSSPA) are compositionally biased toward polar residues. The segment covering 387–397 (QKVDHVESSKE) has biased composition (basic and acidic residues). Positions 426-481 (EPTRKEMLEVVSKILKEVDFNTATLSDILQKLSDHFGVELSHRKPEVKDVITEAIN) constitute a DEK-C domain. 2 DNA-binding regions span residues 444–458 (DFNT…QKLS) and 473–477 (KDVIT). The disordered stretch occupies residues 482 to 530 (AMTDDEEEDEEEEAEAGSDKEKEEVKGEEEEEKAEAESDKEKEKEEPKD). Residues 484 to 497 (TDDEEEDEEEEAEA) show a composition bias toward acidic residues. Residues 492–527 (EEEAEAGSDKEKEEVKGEEEEEKAEAESDKEKEKEE) are a coiled coil. The span at 516–530 (EAESDKEKEKEEPKD) shows a compositional bias: basic and acidic residues.

In terms of assembly, found in a mRNA splicing-dependent exon junction complex (EJC). Binds specifically histones H3 and H4.

It localises to the nucleus. Its subcellular location is the nucleolus. In terms of biological role, chromatin-associated protein which contributes to the modulation of chromatin structure (such as super-helical structure of DNA) and function. Binds to chromatin of protein-coding genes throughout the genome to regulate nucleosome occupancy and chromatin accessibility, and to modulate the expression of target genes. The protein is DEK domain-containing chromatin-associated protein 2 of Arabidopsis thaliana (Mouse-ear cress).